We begin with the raw amino-acid sequence, 294 residues long: Putative lipid kinase SP_1045 (294 aa).

The DAGKc domain maps to 1–131; that stretch reads MKKAMVIINP…IDIGKANDNY (131 aa). ATP contacts are provided by residues 9-13, T40, 66-72, and T93; these read NPTSG and GDGTVNE. Residues D212 and Y214 each coordinate Mg(2+). The active-site Proton acceptor is D269.

The protein belongs to the diacylglycerol/lipid kinase family. The cofactor is Mg(2+).

Functionally, may catalyze the ATP-dependent phosphorylation of lipids other than diacylglycerol (DAG). In fact, is not able to exhibit diacylglycerol kinase activity in vitro. The chain is Putative lipid kinase SP_1045 from Streptococcus pneumoniae serotype 4 (strain ATCC BAA-334 / TIGR4).